We begin with the raw amino-acid sequence, 239 residues long: Purine nucleoside phosphorylase DeoD-type (239 aa).

H5 provides a ligand contact to a purine D-ribonucleoside. Phosphate contacts are provided by residues G21, R25, R44, and 88–91; that span reads RVGS. Residues 180–182 and 204–205 contribute to the a purine D-ribonucleoside site; these read EME and SD. The active-site Proton donor is D205.

It belongs to the PNP/UDP phosphorylase family. In terms of assembly, homohexamer; trimer of homodimers.

It catalyses the reaction a purine D-ribonucleoside + phosphate = a purine nucleobase + alpha-D-ribose 1-phosphate. It carries out the reaction a purine 2'-deoxy-D-ribonucleoside + phosphate = a purine nucleobase + 2-deoxy-alpha-D-ribose 1-phosphate. Catalyzes the reversible phosphorolytic breakdown of the N-glycosidic bond in the beta-(deoxy)ribonucleoside molecules, with the formation of the corresponding free purine bases and pentose-1-phosphate. The polypeptide is Purine nucleoside phosphorylase DeoD-type (Salmonella gallinarum (strain 287/91 / NCTC 13346)).